A 179-amino-acid chain; its full sequence is Large ribosomal subunit protein uL6 (179 aa).

This sequence belongs to the universal ribosomal protein uL6 family. In terms of assembly, part of the 50S ribosomal subunit.

In terms of biological role, this protein binds to the 23S rRNA, and is important in its secondary structure. It is located near the subunit interface in the base of the L7/L12 stalk, and near the tRNA binding site of the peptidyltransferase center. The polypeptide is Large ribosomal subunit protein uL6 (Mycolicibacterium gilvum (strain PYR-GCK) (Mycobacterium gilvum (strain PYR-GCK))).